Here is a 254-residue protein sequence, read N- to C-terminus: HTH-type transcriptional repressor DasR (254 aa).

Positions 17 to 87 (RTARVPKYYR…QGKGTFVAKP (71 aa)) constitute an HTH gntR-type domain. The H-T-H motif DNA-binding region spans 47–66 (ERTLAAEFDTSRTTVRQALQ).

It localises to the cytoplasm. Its activity is regulated as follows. Binding to the target genes is abolished by GlcN6P, a central molecule in N-acetylglucosamine metabolism. In terms of biological role, global regulator that is part of the nutrient-sensing system. In the absence of glucosamine 6-P (GlcN6P), represses the phosphotransferase system (PTS) specific for the uptake of N-acetylglucosamine (PTSNag), and genes involved in the metabolism of chitin, as well as several genes involved in development, thereby linking carbon availability to morphogenesis. Also regulates the expression of the ABC transporters DasABC and NgcEFG, which are involved in N,N'-diacetylchitobiose ((GlcNAc)2) uptake. Binds to the DNA consensus sequence 5'-ACTGGTCTAGACCACT-3'. This is HTH-type transcriptional repressor DasR (dasR) from Streptomyces coelicolor (strain ATCC BAA-471 / A3(2) / M145).